The chain runs to 190 residues: MSFQLPQLPYAYNALEPHISKETLEFHHDKHHATYVNKLNGLVKGTEQEHKTLEELIKQKPTQAIYNNAAQAWNHAFYWKCMCGCGVKPSEQLIAKLTAAFGGLEEFKKKFTEKAVGHFGSGWCWLVEHDGKLEIIDTHDAVNPMTNGMKPLLTCDVWEHAYYIDTRNNRAAYLEHWWNVVNWKFVEEQL.

The Fe cation site is built by His27, His75, Asp156, and His160.

The protein belongs to the iron/manganese superoxide dismutase family. As to quaternary structure, homodimer. Fe cation is required as a cofactor.

It catalyses the reaction 2 superoxide + 2 H(+) = H2O2 + O2. In terms of biological role, destroys superoxide anion radicals which are normally produced within the cells and which are toxic to biological systems. The chain is Superoxide dismutase [Fe] (SODB) from Entamoeba histolytica (strain ATCC 30459 / HM-1:IMSS / ABRM).